Here is a 426-residue protein sequence, read N- to C-terminus: O-methyltransferase pyvH (426 aa).

S-adenosyl-L-methionine-binding positions include 258–259, aspartate 281, 308–309, and arginine 323; these read GG and DF. Residue histidine 327 is the Proton acceptor of the active site.

It belongs to the class I-like SAM-binding methyltransferase superfamily. Cation-independent O-methyltransferase family.

It participates in secondary metabolite biosynthesis. Functionally, O-methyltransferase; part of the gene cluster that mediates the biosynthesis of pyranoviolin A, a pyranonigrin analog with a C-3 methoxy group. Initially, the PKS portion of pyvA synthesizes C-10 carbon chain from 5 molecules of malonyl-CoA, which is then condensed with the thiolation (T) domain-bound glycine activated by the adenylation (A) domain. The subsequent chain release by Dieckmann condensation (DKC) could be catalyzed by the TE domain present at the C-terminus of pyvA and/or the alpha/beta hydrolase pyvD, installing the tetramic acid moiety. The FAD-dependent monooxygenase pyvC next epoxidizes one of the olefins of the polyketide part, and the epoxide ring-opening induces the dihydro-gamma-pyrone ring formation. The cytochrome P450 monooxygeanse pyvB would be responsible for the 2 consecutive reactions, in which the dihydro-gamma-pyrone is oxidized to gamma-pyrone and C-7 is hydroxylated to yield pyranonigrin F. Finally, the O-methyltransferase pyvH methylates the C-3 hydroxy group to complete the biosynthesis. In Aspergillus violaceofuscus (strain CBS 115571), this protein is O-methyltransferase pyvH.